Here is a 275-residue protein sequence, read N- to C-terminus: Large ribosomal subunit protein uL2 (275 aa).

Disordered regions lie at residues 28–49 (APHAALVESQSRSGGRNHHGRI) and 224–246 (AMNPVDHPHGGGEAKAGQGNPHP).

It belongs to the universal ribosomal protein uL2 family. In terms of assembly, part of the 50S ribosomal subunit. Forms a bridge to the 30S subunit in the 70S ribosome.

Its function is as follows. One of the primary rRNA binding proteins. Required for association of the 30S and 50S subunits to form the 70S ribosome, for tRNA binding and peptide bond formation. It has been suggested to have peptidyltransferase activity; this is somewhat controversial. Makes several contacts with the 16S rRNA in the 70S ribosome. The protein is Large ribosomal subunit protein uL2 of Stenotrophomonas maltophilia (strain R551-3).